Reading from the N-terminus, the 307-residue chain is Ribonuclease Z (307 aa).

Positions 63, 65, 67, 68, 141, 212, and 270 each coordinate Zn(2+). Catalysis depends on aspartate 67, which acts as the Proton acceptor.

Belongs to the RNase Z family. As to quaternary structure, homodimer. Zn(2+) is required as a cofactor.

The enzyme catalyses Endonucleolytic cleavage of RNA, removing extra 3' nucleotides from tRNA precursor, generating 3' termini of tRNAs. A 3'-hydroxy group is left at the tRNA terminus and a 5'-phosphoryl group is left at the trailer molecule.. In terms of biological role, zinc phosphodiesterase, which displays some tRNA 3'-processing endonuclease activity. Probably involved in tRNA maturation, by removing a 3'-trailer from precursor tRNA. The chain is Ribonuclease Z from Bacillus cereus (strain ATCC 14579 / DSM 31 / CCUG 7414 / JCM 2152 / NBRC 15305 / NCIMB 9373 / NCTC 2599 / NRRL B-3711).